Here is a 507-residue protein sequence, read N- to C-terminus: ATP synthase subunit alpha, chloroplastic (507 aa).

Residue 170–177 participates in ATP binding; it reads GDRQTGKT.

The protein belongs to the ATPase alpha/beta chains family. F-type ATPases have 2 components, CF(1) - the catalytic core - and CF(0) - the membrane proton channel. CF(1) has five subunits: alpha(3), beta(3), gamma(1), delta(1), epsilon(1). CF(0) has four main subunits: a, b, b' and c.

It is found in the plastid. The protein localises to the chloroplast thylakoid membrane. The enzyme catalyses ATP + H2O + 4 H(+)(in) = ADP + phosphate + 5 H(+)(out). Produces ATP from ADP in the presence of a proton gradient across the membrane. The alpha chain is a regulatory subunit. This Gossypium hirsutum (Upland cotton) protein is ATP synthase subunit alpha, chloroplastic.